Reading from the N-terminus, the 215-residue chain is Oligoribonuclease (215 aa).

The 166-residue stretch at 5–170 (LVWIDCEMTG…ADIHESIREL (166 aa)) folds into the Exonuclease domain. Residue tyrosine 127 is part of the active site. The segment at 196–215 (LGPPGKDAADTDSAAGHTTG) is disordered.

Belongs to the oligoribonuclease family.

Its subcellular location is the cytoplasm. 3'-to-5' exoribonuclease specific for small oligoribonucleotides. The polypeptide is Oligoribonuclease (Mycobacterium sp. (strain JLS)).